We begin with the raw amino-acid sequence, 494 residues long: WD repeat-containing protein 37 (494 aa).

Positions 1–38 (MPTESGSWAAARQTKQKRKSHSLSIKRTNSSEQDRPGL) are disordered. Over residues 22 to 31 (SLSIKRTNSS) the composition is skewed to polar residues. 2 WD repeats span residues 154-194 (GHRD…CLIK) and 197-236 (GHAG…PTPQ). The segment at 236 to 266 (QPTADTSISGEEEVDFSDKDENDGDGDASSD) is disordered. The span at 245–263 (GEEEVDFSDKDENDGDGDA) shows a compositional bias: acidic residues. WD repeat units lie at residues 279-318 (SHQG…LVHS), 321-360 (GHDQ…IHSV), 365-403 (GHTD…SPIA), 406-445 (RTDS…LARL), and 452-493 (GHRR…LLQE).

Its subcellular location is the cytoplasm. The protein localises to the nucleus. The protein is WD repeat-containing protein 37 (wdr37) of Xenopus tropicalis (Western clawed frog).